We begin with the raw amino-acid sequence, 52 residues long: KKKRGWDTPAPCHYCQWKGPQCCVYYCSSCNYEEAREEGHYVSSHLLERQGR.

Residues 1–4 constitute a propeptide that is removed on maturation; it reads KKKR. Cystine bridges form between cysteine 12–cysteine 23, cysteine 15–cysteine 27, and cysteine 22–cysteine 30. Glutamine 50 carries the glutamine amide modification.

As to expression, expressed by the venom duct.

The protein resides in the secreted. In terms of biological role, probable neurotoxin with unknown target. Possibly targets ion channels. In Californiconus californicus (California cone), this protein is Conotoxin Cal6.3b.